The chain runs to 98 residues: Dehydrogenase acuH (98 aa).

The protein operates within secondary metabolite biosynthesis. In terms of biological role, dehydrogenase; part of the gene cluster that mediates the biosynthesis of aculins. The pathway begins with the synthesis of 6-methylsalicylic acid by the polyketide synthase (PKS) acuA via condensation of acetate and malonate units. The 6-methylsalicylic acid decarboxylase acuB then catalyzes the decarboxylation of 6-methylsalicylic acid to yield m-cresol (also known as 3-methylphenol). These first reactions occur in the cytosol. The intermediate m-cresol is then transported into the endoplasmic reticulum where the cytochrome P450 monooxygenase acuC converts it to m-hydroxybenzyl alcohol, which is further converted to gentisyl alcohol by the cytochrome P450 monooxygenase acuD. Gentisyl alcohol is further oxidized by the oxidoreductase acuE that probably catalyzes hydroxylation of the aromatic ring. The aromatic system might then be opened by oxidation through a Baeyer-Villiger type of oxidation, which could be catalyzed by acuF, with the carboxylic acid at C-1 subsequently reduced to an aldehyde by acuG. Subsequently, a hemiacetal is formed, before the dehydrogenase acuH would reduce the double bond between C-4 and C-6. Finally, keto-enol tautomerism results in formation of aculinic acid, which exists as two diastereomers (both R/S configurations at C-1) by non-enzymatic hemiacetal formation. The carboxypeptidase acuI could be involved in the linking of aculinic acid to an aculene A moiety produced by the aculene biosynthesis cluster and which leads to the production of aculin A. AcuI may also be involved in the attachment of proline to aculinic acid to form epi-aculins A and B. The sequence is that of Dehydrogenase acuH from Aspergillus aculeatus (strain ATCC 16872 / CBS 172.66 / WB 5094).